A 502-amino-acid polypeptide reads, in one-letter code: Mannitol 2-dehydrogenase (502 aa).

37-48 (IVHVGVGGFHRA) is a binding site for NAD(+).

This sequence belongs to the mannitol dehydrogenase family. As to quaternary structure, monomer.

The catalysed reaction is D-mannitol + NAD(+) = D-fructose + NADH + H(+). Functionally, catalyzes the NAD(H)-dependent interconversion of D-fructose and D-mannitol in the mannitol metabolic pathway. The protein is Mannitol 2-dehydrogenase of Aspergillus terreus (strain NIH 2624 / FGSC A1156).